A 367-amino-acid chain; its full sequence is Testis-specific serine/threonine-protein kinase 1 (367 aa).

The region spanning 12–272 (YLLGINLGEG…IDEILSHCWM (261 aa)) is the Protein kinase domain. Residues 18–26 (LGEGSYAKV) and lysine 41 each bind ATP. Aspartate 136 functions as the Proton acceptor in the catalytic mechanism. Threonine 174 bears the Phosphothreonine mark. Residues 276 to 367 (ARGSPSVAIN…PQQPPETRAQ (92 aa)) are disordered. Residues 303–314 (GSDKKSATKLEP) are compositionally biased toward basic and acidic residues.

Belongs to the protein kinase superfamily. CAMK Ser/Thr protein kinase family. As to quaternary structure, interacts with TSSK2. Interacts with HSP90; this interaction stabilizes TSSK1. Requires Mg(2+) as cofactor. Autophosphorylated. Post-translationally, ubiquitinated; HSP90 activity negatively regulates ubiquitination and degradation. As to expression, testis-specific. Present in sperm (at protein level).

Its subcellular location is the cytoplasm. The protein resides in the cytoplasmic vesicle. It localises to the secretory vesicle. It is found in the acrosome. The protein localises to the cell projection. Its subcellular location is the cilium. The protein resides in the flagellum. It carries out the reaction L-seryl-[protein] + ATP = O-phospho-L-seryl-[protein] + ADP + H(+). The enzyme catalyses L-threonyl-[protein] + ATP = O-phospho-L-threonyl-[protein] + ADP + H(+). Its activity is regulated as follows. Kinase activity is specifically inhibited by 2 classes of compounds: biphenyl compounds (1,1'-(biphenyl-4,4'-diyl)bis(2,2-dihydroxyethanone)) and 1,2,7-trialky-1H-imidazo[4,5-g]quinoxalin-6-one. Activated by phosphorylation on Thr-174 and potentially by autophosphorylation. Its function is as follows. Testis-specific serine/threonine-protein kinase required during spermatid development. Phosphorylates 'Ser-288' of TSKS. Involved in the late stages of spermatogenesis, during the reconstruction of the cytoplasm. During spermatogenesis, required for the transformation of a ring-shaped structure around the base of the flagellum originating from the chromatoid body. The chain is Testis-specific serine/threonine-protein kinase 1 (TSSK1B) from Homo sapiens (Human).